A 305-amino-acid polypeptide reads, in one-letter code: MDVSIDFAGLKLKNPILTASGTFGFGLEFQRYGDLESLGGIVVKGLSLKPREGNPMPRIAETPCGMLNAIGIQNPGVEEFINKKLPKLPWKTLPVLANLYATDAEEFGELAGVLAGEEGVAALEVNVSCPNVKEGGIAFGQDPKQITKVAEAVKKNAGNKPIIIKLSPNVTDITVCAKAAEDGGADALSLINTLSGMAVDIERRTPRLANVIGGLSGPAVKPVALRCVYQTVNAVKIPVMGLGGITTAEDAAEFLLVGAKAVQIGTGNFLSPDTAFRIAEELPKVLERVKAESLDEFIGSLKLPK.

FMN contacts are provided by residues Ser-20 and 44–45 (KG). Residues Lys-44 and 68-72 (NAIGI) contribute to the substrate site. 2 residues coordinate FMN: Asn-98 and Asn-126. Asn-126 is a binding site for substrate. Cys-129 acts as the Nucleophile in catalysis. Residues Lys-165 and Ile-191 each coordinate FMN. 192–193 (NT) lines the substrate pocket. Residues Gly-217, 243-244 (GG), and 265-266 (GT) contribute to the FMN site.

Belongs to the dihydroorotate dehydrogenase family. Type 1 subfamily. Heterotetramer of 2 PyrK and 2 PyrD type B subunits. Requires FMN as cofactor.

The protein resides in the cytoplasm. The catalysed reaction is (S)-dihydroorotate + NAD(+) = orotate + NADH + H(+). The protein operates within pyrimidine metabolism; UMP biosynthesis via de novo pathway; orotate from (S)-dihydroorotate (NAD(+) route): step 1/1. Catalyzes the conversion of dihydroorotate to orotate with NAD(+) as electron acceptor. The protein is Dihydroorotate dehydrogenase B (NAD(+)), catalytic subunit (pyrD) of Maridesulfovibrio salexigens (strain ATCC 14822 / DSM 2638 / NCIMB 8403 / VKM B-1763) (Desulfovibrio salexigens).